Consider the following 321-residue polypeptide: Diguanylate cyclase (321 aa).

The PAS domain maps to 28–98 (QFSLHELVLN…AADQQVFETR (71 aa)). Residues 102–155 (VHEERAIAKSNGLVRIYRAVKHPILHRVTGEVIGLIGVSTDITDIVELREQLYQ) enclose the PAC domain. The 132-residue stretch at 187 to 318 (QPLSCISIDI…GRNRCCIYRQ (132 aa)) folds into the GGDEF domain. Mg(2+) contacts are provided by aspartate 195, isoleucine 196, and glutamate 238. Glutamate 238 serves as the catalytic Proton acceptor.

Requires Mg(2+) as cofactor.

The enzyme catalyses 2 GTP = 3',3'-c-di-GMP + 2 diphosphate. In terms of biological role, involved in biofilm formation. Catalyzes the conversion of GTP to c-di-GMP. The polypeptide is Diguanylate cyclase (Vibrio cholerae serotype O1 (strain ATCC 39541 / Classical Ogawa 395 / O395)).